Here is a 291-residue protein sequence, read N- to C-terminus: Pyridoxal 5'-phosphate synthase subunit PdxS (291 aa).

Asp23 contacts D-ribose 5-phosphate. Lys80 functions as the Schiff-base intermediate with D-ribose 5-phosphate in the catalytic mechanism. Residue Gly152 participates in D-ribose 5-phosphate binding. Arg164 is a D-glyceraldehyde 3-phosphate binding site. D-ribose 5-phosphate contacts are provided by residues Gly213 and 234 to 235 (GS).

The protein belongs to the PdxS/SNZ family. As to quaternary structure, in the presence of PdxT, forms a dodecamer of heterodimers.

It carries out the reaction aldehydo-D-ribose 5-phosphate + D-glyceraldehyde 3-phosphate + L-glutamine = pyridoxal 5'-phosphate + L-glutamate + phosphate + 3 H2O + H(+). It functions in the pathway cofactor biosynthesis; pyridoxal 5'-phosphate biosynthesis. Functionally, catalyzes the formation of pyridoxal 5'-phosphate from ribose 5-phosphate (RBP), glyceraldehyde 3-phosphate (G3P) and ammonia. The ammonia is provided by the PdxT subunit. Can also use ribulose 5-phosphate and dihydroxyacetone phosphate as substrates, resulting from enzyme-catalyzed isomerization of RBP and G3P, respectively. This is Pyridoxal 5'-phosphate synthase subunit PdxS from Bifidobacterium longum (strain NCC 2705).